A 386-amino-acid polypeptide reads, in one-letter code: ABC transporter permease protein NatB (386 aa).

6 helical membrane-spanning segments follow: residues 19 to 39 (TILLTILVPMIMMLGLVFFYE), 172 to 192 (AIMLSAILPMLILTSIVSGAM), 226 to 246 (WLAVSTFGVASGVFALVFLIL), 273 to 293 (ALIIVLSALLISAMELFISIM), 300 to 320 (AQSYMSLVVFLPVFPMFFIFS), and 353 to 373 (ATILSTSGTIAVLIAIFFLLA).

As to quaternary structure, the complex is composed of NatA and NatB.

The protein resides in the cell membrane. The catalysed reaction is Na(+)(in) + ATP + H2O = Na(+)(out) + ADP + phosphate + H(+). Part of an ABC transporter that catalyzes ATP-dependent electrogenic sodium extrusion. The chain is ABC transporter permease protein NatB from Bacillus subtilis (strain 168).